We begin with the raw amino-acid sequence, 295 residues long: Cuticle collagen 3A3 (295 aa).

The segment at 81–278 is disordered; that stretch reads AITSSEENGG…GRPGEPGICP (198 aa). Pro residues-rich tracts occupy residues 97–109 and 146–160; these read PGPPGPPGPPGRP and AGPPGPPGKPGPPGD. 3 triple-helical region regions span residues 98 to 127, 147 to 203, and 212 to 277; these read GPPGPPGPPGRPGRPGRPGAPGLPGVPGLP, GPPG…VGED, and GDQG…PGIC. The segment covering 172-182 has biased composition (low complexity); the sequence is QDGIPGQQGTK. Positions 217 to 228 are enriched in pro residues; it reads PGEPGPEGPPGE. Residues 229 to 244 are compositionally biased toward low complexity; sequence PGLQGPVGMPGQVGQK. The segment covering 261-271 has biased composition (pro residues); the sequence is RPGPPGPPGRP.

Belongs to the cuticular collagen family.

Nematode cuticles are composed largely of collagen-like proteins. The cuticle functions both as an exoskeleton and as a barrier to protect the worm from its environment. This is Cuticle collagen 3A3 (3A3) from Haemonchus contortus (Barber pole worm).